Here is a 123-residue protein sequence, read N- to C-terminus: MLKEFKTFIARGNVIDMAVGIIVGAAFTSIVKSLVNNLINPLIGLFIGRIDLSNLVLTVGDAQFKYGSFLNAVINFLIISFVVFLMVKAINTFRKKEDKKTEAPSEEVMYLKEITELLKKNKE.

The next 2 membrane-spanning stretches (helical) occupy residues 14-34 and 67-87; these read VIDMAVGIIVGAAFTSIVKSL and GSFLNAVINFLIISFVVFLMV.

Belongs to the MscL family. Homopentamer.

It localises to the cell membrane. Functionally, channel that opens in response to stretch forces in the membrane lipid bilayer. May participate in the regulation of osmotic pressure changes within the cell. The polypeptide is Large-conductance mechanosensitive channel (Limosilactobacillus reuteri (strain DSM 20016) (Lactobacillus reuteri)).